Consider the following 96-residue polypeptide: Co-chaperonin GroES (96 aa).

This sequence belongs to the GroES chaperonin family. In terms of assembly, heptamer of 7 subunits arranged in a ring. Interacts with the chaperonin GroEL.

The protein resides in the cytoplasm. Together with the chaperonin GroEL, plays an essential role in assisting protein folding. The GroEL-GroES system forms a nano-cage that allows encapsulation of the non-native substrate proteins and provides a physical environment optimized to promote and accelerate protein folding. GroES binds to the apical surface of the GroEL ring, thereby capping the opening of the GroEL channel. The sequence is that of Co-chaperonin GroES from Geotalea daltonii (strain DSM 22248 / JCM 15807 / FRC-32) (Geobacter daltonii).